The sequence spans 952 residues: Glutamate receptor 2.7 (952 aa).

Positions 1 to 32 (MKVMNPRKTNNTFMYYFVLFVCGFVLMEGCLG) are cleaved as a signal peptide. Topologically, residues 33–582 (QNQTTEIKVG…NTWVFLRPWS (550 aa)) are extracellular. Residues asparagine 34, asparagine 60, asparagine 355, asparagine 428, and asparagine 546 are each glycosylated (N-linked (GlcNAc...) asparagine). A helical transmembrane segment spans residues 583–603 (LDLWVTTACFFVFIGFIVWIL). At 604–612 (EHRVNTDFR) the chain is on the cytoplasmic side. A helical transmembrane segment spans residues 613 to 633 (GPPHHQIGTSFWFAFSTMNFA). Over 634 to 637 (HREK) the chain is Cytoplasmic. Residues 638 to 658 (VVSNLARFVVLVWCFVVLVLI) traverse the membrane as a helical segment. Over 659–821 (QSYTANLTSF…LSSNHLSLSS (163 aa)) the chain is Extracellular. 5 N-linked (GlcNAc...) asparagine glycosylation sites follow: asparagine 664, asparagine 728, asparagine 748, asparagine 784, and asparagine 809. Residues 822–842 (FWGLFLIAGIASFLALLIFVA) traverse the membrane as a helical segment. Residues 843–952 (NFLYEHKHTL…ESAIIQCEGE (110 aa)) lie on the Cytoplasmic side of the membrane. Positions 889 to 908 (VSSPITQGSSSPLTDQSTPL) are enriched in polar residues. Disordered regions lie at residues 889-914 (VSSPITQGSSSPLTDQSTPLPRSPEQ) and 932-952 (FTTQSEQVEDEESAIIQCEGE).

This sequence belongs to the glutamate-gated ion channel (TC 1.A.10.1) family. In terms of assembly, may form heteromers. As to expression, expressed predominantly in leaves.

It is found in the membrane. Functionally, glutamate-gated receptor that probably acts as a non-selective cation channel. May be involved in light-signal transduction and calcium homeostasis via the regulation of calcium influx into cells. The protein is Glutamate receptor 2.7 (GLR2.7) of Arabidopsis thaliana (Mouse-ear cress).